Consider the following 430-residue polypeptide: Adenylosuccinate synthetase (430 aa).

GTP-binding positions include 13–19 (GDEGKGK) and 41–43 (GHT). Aspartate 14 (proton acceptor) is an active-site residue. Residues aspartate 14 and glycine 41 each coordinate Mg(2+). IMP is bound by residues 14 to 17 (DEGK), 39 to 42 (NAGH), threonine 130, arginine 144, glutamine 225, threonine 240, and arginine 304. Histidine 42 (proton donor) is an active-site residue. Substrate is bound at residue 300-306 (ASTGRPR). GTP is bound by residues arginine 306, 332–334 (KLD), and 414–416 (STG).

Belongs to the adenylosuccinate synthetase family. As to quaternary structure, homodimer. Requires Mg(2+) as cofactor.

It is found in the cytoplasm. It carries out the reaction IMP + L-aspartate + GTP = N(6)-(1,2-dicarboxyethyl)-AMP + GDP + phosphate + 2 H(+). The protein operates within purine metabolism; AMP biosynthesis via de novo pathway; AMP from IMP: step 1/2. In terms of biological role, plays an important role in the de novo pathway of purine nucleotide biosynthesis. Catalyzes the first committed step in the biosynthesis of AMP from IMP. The sequence is that of Adenylosuccinate synthetase from Xanthomonas campestris pv. campestris (strain 8004).